The primary structure comprises 36 residues: Amanexitide proprotein 2 (36 aa).

Positions Met1 to Pro10 are excised as a propeptide. The cyclopeptide (Val-Pro) cross-link spans Val11–Pro19. Positions Phe20–Cys36 are excised as a propeptide.

Belongs to the MSDIN fungal toxin family. Post-translationally, processed by the macrocyclase-peptidase enzyme POPB to yield a toxic cyclic nonapeptide. POPB first removes 10 residues from the N-terminus. Conformational trapping of the remaining peptide forces the enzyme to release this intermediate rather than proceed to macrocyclization. The enzyme rebinds the remaining peptide in a different conformation and catalyzes macrocyclization of the N-terminal 9 residues. In terms of tissue distribution, expressed in basidiocarps.

In terms of biological role, cyclic nonapeptide that belongs to the MSDIN-like toxin family responsible for a large number of food poisoning cases and deaths. The protein is Amanexitide proprotein 2 of Amanita exitialis (Guangzhou destroying angel).